The primary structure comprises 673 residues: Armadillo repeat-containing protein 8 (673 aa).

Position 2 is an N-acetylalanine (alanine 2). ARM repeat units follow at residues 51–92, 95–134, 138–176, 178–217, 224–265, 269–309, 313–352, 374–413, 416–455, 458–497, 501–540, 543–585, 588–627, and 634–673; these read NKQK…SLAM, ENNV…TIFT, TPEE…HCCK, PDHQ…VLAF, MTLV…YMCR, IRTD…YLIE, ELQR…HDLK, DIRK…SLSR, QQLR…NLLL, SPSK…NMAF, QKIK…NLLS, PHID…NIAD, TAKE…NLTW, and QERQ…QYLA. Position 337 is a phosphoserine (serine 337). Serine 512 bears the Phosphoserine mark.

In terms of assembly, identified in the CTLH complex that contains GID4, RANBP9 and/or RANBP10, MKLN1, MAEA, RMND5A (or alternatively its paralog RMND5B), GID8, ARMC8, WDR26 and YPEL5. Within this complex, MAEA, RMND5A (or alternatively its paralog RMND5B), GID8, WDR26, and RANBP9 and/or RANBP10 form the catalytic core, while GID4, MKLN1, ARMC8 and YPEL5 have ancillary roles.

The protein resides in the nucleus. Its subcellular location is the cytoplasm. Its function is as follows. Component of the CTLH E3 ubiquitin-protein ligase complex that selectively accepts ubiquitin from UBE2H and mediates ubiquitination and subsequent proteasomal degradation of the transcription factor HBP1. The protein is Armadillo repeat-containing protein 8 (Armc8) of Mus musculus (Mouse).